The chain runs to 1525 residues: Receptor-type guanylate cyclase Gyc76C (1525 aa).

The first 19 residues, 1-19 (MTRWPFNLLLLLSVAVRDC), serve as a signal peptide directing secretion. Over 20–493 (SNHRTVLTVG…KKDDTHYTST (474 aa)) the chain is Extracellular. Residues N74, N184, N222, N338, N383, N394, N416, N428, and N458 are each glycosylated (N-linked (GlcNAc...) asparagine). Residues 494–514 (VAAVVLGVLLFCSGVITMSIY) form a helical membrane-spanning segment. The Cytoplasmic segment spans residues 515–1525 (RKWKIELEIE…AAARDRESIV (1011 aa)). A Protein kinase domain is found at 547–824 (PSKVSLMSAQ…SVIRNRLKKM (278 aa)). ATP is bound by residues 553 to 561 (MSAQSYGSR) and K581. Residues 896–1026 (TIYFSDIVGF…DTVNTASRME (131 aa)) enclose the Guanylate cyclase domain. Mg(2+)-binding residues include D901, I902, and D945. Disordered regions lie at residues 1122–1168 (GSRR…NGLG), 1192–1217 (ETNETNCDMDGGSGGVSGSGSGLVRQ), and 1256–1308 (ESRS…VHSS). Over residues 1147–1162 (ESPRMVSKRDRDRERP) the composition is skewed to basic and acidic residues. Residues 1202–1212 (GGSGGVSGSGS) are compositionally biased toward gly residues. The span at 1282-1308 (LSKNNSRSLDTGVSLISGNPNGEVHSS) shows a compositional bias: polar residues.

The protein belongs to the adenylyl cyclase class-4/guanylyl cyclase family. As to quaternary structure, interacts with the semaphorin 1A receptor PlexA; PlexA enhances Gyc76C catalytic activity. Interacts with the PDZ domain-containing protein kermit; kermit increases cell surface expression of Gyc76C. As to expression, in the adult, widely distributed in the head and thorax with highest levels in the optic lobe and central brain and expression also detected in the retina. Expressed at similar levels in adult head and body. In females, highly expressed in oocytes with lower levels in the digestive tract. In mid-embryogenesis, enriched in the circular visceral mesoderm that overlies the migrating salivary gland and in the fat body that underlies the gland but at background levels in the gland itself. In late embryogenesis, detected in the mature salivary gland, in the somatic body wall muscles and the tendon cells to which the muscles attach, and in the constricting midgut. Also expressed in migrating tracheal cells at mid-embryogenesis and in the developed trachea at the end of embryogenesis with enrichment in the apical domains.

It localises to the cell membrane. The enzyme catalyses GTP = 3',5'-cyclic GMP + diphosphate. Guanylate cyclase involved in the production of the second messenger cGMP. Acts as a receptor for the NPLP1-4 peptide and modulates the innate immune IMD pathway in response to salt stress by inducing nuclear translocation of NF-kappa-B protein Rel which leads to increased expression of the antimicrobial peptide diptericin. Plays a role in Sema-1a-mediated axon repulsion which is required for the correct establishment of neuromuscular connectivity. Required in developing embryonic somatic muscle for correct patterning of ventral and lateral muscles and for localization of integrin beta-ps at developing dorsal muscle myotendinous junctions. Required for invagination, migration and lumen shape of the embryonic salivary gland by regulating the localization of the integrin-binding protein rhea/Talin to the visceral mesoderm surrounding the gland and maintaining the laminin matrix. Required in the developing wing to regulate extracellular matrix (ECM) organization by activating the cGMP-dependent protein kinase For which represses the activity of matrix metalloproteases such as Mmp2 and decreases ECM matrix reorganization. The sequence is that of Receptor-type guanylate cyclase Gyc76C from Drosophila melanogaster (Fruit fly).